We begin with the raw amino-acid sequence, 490 residues long: Membrane-bound lytic murein transglycosylase F (490 aa).

Positions 1-32 are cleaved as a signal peptide; sequence MFALTAYRLRCAAWLLATGIFLLLAGCSEAKA. Residues 33–269 are non-LT domain; it reads PTALERVQKE…RLKDRYYGHV (237 aa). Residues 270-490 form an LT domain region; sequence DVLGYVGAYT…PDDDEGDGKL (221 aa). Glutamate 316 is an active-site residue. Residues 467-490 form a disordered region; that stretch reads AESGLHLPGVNKTRPDDDEGDGKL.

It in the N-terminal section; belongs to the bacterial solute-binding protein 3 family. This sequence in the C-terminal section; belongs to the transglycosylase Slt family.

The protein localises to the cell outer membrane. The enzyme catalyses Exolytic cleavage of the (1-&gt;4)-beta-glycosidic linkage between N-acetylmuramic acid (MurNAc) and N-acetylglucosamine (GlcNAc) residues in peptidoglycan, from either the reducing or the non-reducing ends of the peptidoglycan chains, with concomitant formation of a 1,6-anhydrobond in the MurNAc residue.. Murein-degrading enzyme that degrades murein glycan strands and insoluble, high-molecular weight murein sacculi, with the concomitant formation of a 1,6-anhydromuramoyl product. Lytic transglycosylases (LTs) play an integral role in the metabolism of the peptidoglycan (PG) sacculus. Their lytic action creates space within the PG sacculus to allow for its expansion as well as for the insertion of various structures such as secretion systems and flagella. The sequence is that of Membrane-bound lytic murein transglycosylase F from Pseudomonas paraeruginosa (strain DSM 24068 / PA7) (Pseudomonas aeruginosa (strain PA7)).